Consider the following 658-residue polypeptide: Zinc finger protein 135 (658 aa).

One can recognise a KRAB domain in the interval 14–85 (VTFEDVVVGF…ESRLPQGVYP (72 aa)). The segment at 171–196 (LNPDLPHQPMTPERQSPHTWGTRGKR) is disordered. 16 consecutive C2H2-type zinc fingers follow at residues 214 to 236 (YKCQECGKAFSHSSALIEHHRTH), 242 to 264 (YECHECLKGFRNSSALTKHQRIH), 270 to 292 (YKCTQCGRTFNQIAPLIQHQRTH), 298 to 320 (YECSECGKSFSFRSSFSQHERTH), 326 to 348 (YECSECGKAFRQSIHLTQHLRIH), 354 to 376 (YQCGECGKAFSHSSSLTKHQRIH), 382 to 404 (YECHECGKAFTQITPLIQHQRTH), 410 to 432 (YECGECGKAFSQSTLLTEHRRIH), 438 to 460 (YGCNECGKTFSHSSSLSQHERTH), 466 to 488 (YECSQCGKAFRQSTHLTQHQRIH), 494 to 516 (YECNDCGKAFSHSSSLTKHQRIH), 522 to 544 (YECNQCGRAFSQLAPLIQHQRIH), 550 to 572 (YECNQCGRAFSQSSLLIEHQRIH), 578 to 600 (YGCNECGKSFSHSSSLSQHERTH), 606 to 628 (YECHDCGKSFRQSTHLTQHRRIH), and 634 to 656 (YACRDCGKAFTHSSSLTKHQRTH).

The protein belongs to the krueppel C2H2-type zinc-finger protein family.

The protein resides in the nucleus. Plays a role in the regulation of cell morphology and cytoskeletal organization. May be involved in transcriptional regulation. The polypeptide is Zinc finger protein 135 (ZNF135) (Homo sapiens (Human)).